The primary structure comprises 168 residues: 6,7-dimethyl-8-ribityllumazine synthase (168 aa).

5-amino-6-(D-ribitylamino)uracil contacts are provided by residues W31, 65 to 67, and 89 to 91; these read SFE and CVV. 94–95 lines the (2S)-2-hydroxy-3-oxobutyl phosphate pocket; sequence DT. Residue H97 is the Proton donor of the active site. Y122 lines the 5-amino-6-(D-ribitylamino)uracil pocket. R136 serves as a coordination point for (2S)-2-hydroxy-3-oxobutyl phosphate.

This sequence belongs to the DMRL synthase family.

It carries out the reaction (2S)-2-hydroxy-3-oxobutyl phosphate + 5-amino-6-(D-ribitylamino)uracil = 6,7-dimethyl-8-(1-D-ribityl)lumazine + phosphate + 2 H2O + H(+). It functions in the pathway cofactor biosynthesis; riboflavin biosynthesis; riboflavin from 2-hydroxy-3-oxobutyl phosphate and 5-amino-6-(D-ribitylamino)uracil: step 1/2. Its function is as follows. Catalyzes the formation of 6,7-dimethyl-8-ribityllumazine by condensation of 5-amino-6-(D-ribitylamino)uracil with 3,4-dihydroxy-2-butanone 4-phosphate. This is the penultimate step in the biosynthesis of riboflavin. This Phocaeicola vulgatus (strain ATCC 8482 / DSM 1447 / JCM 5826 / CCUG 4940 / NBRC 14291 / NCTC 11154) (Bacteroides vulgatus) protein is 6,7-dimethyl-8-ribityllumazine synthase.